A 162-amino-acid polypeptide reads, in one-letter code: B-box zinc finger protein 23 (162 aa).

Cys-5, Cys-8, Cys-28, His-33, Cys-63, Cys-66, Cys-86, and His-91 together coordinate Zn(2+). Residues 5–47 (CEVCEKAEAEVLCCSDEAVLCKPCDIKVHEANKLFQRHHRVAL) form a B box-type 1; atypical zinc finger. The B box-type 2; atypical zinc finger occupies 63 to 101 (CDICQERKGYFFCLEDRAMLCNDCDEAIHTCNSHQRFLL). Positions 137 to 162 (QYSSEETEAGNSGEIVHKNPSVILSP) are disordered.

The protein localises to the nucleus. Functionally, probable transcription factor that may be involved in seedling photomorphogenesis. The polypeptide is B-box zinc finger protein 23 (Arabidopsis thaliana (Mouse-ear cress)).